A 459-amino-acid polypeptide reads, in one-letter code: Argininosuccinate lyase (459 aa).

The protein belongs to the lyase 1 family. Argininosuccinate lyase subfamily.

Its subcellular location is the cytoplasm. It carries out the reaction 2-(N(omega)-L-arginino)succinate = fumarate + L-arginine. Its pathway is amino-acid biosynthesis; L-arginine biosynthesis; L-arginine from L-ornithine and carbamoyl phosphate: step 3/3. The polypeptide is Argininosuccinate lyase (Lactococcus lactis subsp. cremoris (strain MG1363)).